Consider the following 179-residue polypeptide: Fas apoptotic inhibitory molecule 1 (179 aa).

Residue Thr-2 is modified to N-acetylthreonine.

This sequence belongs to the FAIM1 family.

The protein resides in the cytoplasm. Functionally, plays a role as an inducible effector molecule that mediates Fas resistance produced by surface Ig engagement in B cells. This Homo sapiens (Human) protein is Fas apoptotic inhibitory molecule 1 (FAIM).